The following is a 377-amino-acid chain: MATIGEFTLHATDGKARTGVLQTAHGPVRTPIFMPVGTVGSVKGVAPDDLDAIGAEIILGNTYHLYLRPGDELVARRGGLHEFNAWRKPILTDSGGFQVFSLSGLRRISEEGVEFRSHLDGSKHLFTPEKVVSIQRNLNSDIMMVLDECVPYGADKDYTARSLKMTTRWAQRCRDAYPAGSGGNLMFGITQGGFFKDLREESIGELTRIDFDGFALGGLSVGESKTEMMDILYHTAPMLPAHKPRYLMGVGTPLDIINGINAGIDMFDCVLPTRNARNGTLYTSAGKINIKRREFAEDDGPLDPNCSCYTCRTFSRAYLRHLFHAQEILSYRLNSIHNLTYFLDLVRGAREAIAQGTFAEYKSRYDAIYPQEAALCP.

The Proton acceptor role is filled by Asp-93. Substrate is bound by residues 93–97, Asp-147, Gln-191, and Gly-218; that span reads DSGGF. Residues 249–255 are RNA binding; that stretch reads GVGTPLD. The active-site Nucleophile is Asp-268. The tract at residues 273 to 277 is RNA binding; important for wobble base 34 recognition; sequence TRNAR. Cys-306, Cys-308, Cys-311, and His-337 together coordinate Zn(2+).

The protein belongs to the queuine tRNA-ribosyltransferase family. As to quaternary structure, homodimer. Within each dimer, one monomer is responsible for RNA recognition and catalysis, while the other monomer binds to the replacement base PreQ1. Zn(2+) is required as a cofactor.

It catalyses the reaction 7-aminomethyl-7-carbaguanine + guanosine(34) in tRNA = 7-aminomethyl-7-carbaguanosine(34) in tRNA + guanine. It participates in tRNA modification; tRNA-queuosine biosynthesis. Catalyzes the base-exchange of a guanine (G) residue with the queuine precursor 7-aminomethyl-7-deazaguanine (PreQ1) at position 34 (anticodon wobble position) in tRNAs with GU(N) anticodons (tRNA-Asp, -Asn, -His and -Tyr). Catalysis occurs through a double-displacement mechanism. The nucleophile active site attacks the C1' of nucleotide 34 to detach the guanine base from the RNA, forming a covalent enzyme-RNA intermediate. The proton acceptor active site deprotonates the incoming PreQ1, allowing a nucleophilic attack on the C1' of the ribose to form the product. After dissociation, two additional enzymatic reactions on the tRNA convert PreQ1 to queuine (Q), resulting in the hypermodified nucleoside queuosine (7-(((4,5-cis-dihydroxy-2-cyclopenten-1-yl)amino)methyl)-7-deazaguanosine). This is Queuine tRNA-ribosyltransferase from Oleidesulfovibrio alaskensis (strain ATCC BAA-1058 / DSM 17464 / G20) (Desulfovibrio alaskensis).